The chain runs to 354 residues: tRNA-specific 2-thiouridylase MnmA (354 aa).

Residues leucine 6–serine 13 and leucine 33 contribute to the ATP site. The active-site Nucleophile is the cysteine 100. Cysteine 100 and cysteine 195 are disulfide-bonded. Residue glycine 123 coordinates ATP. The interaction with tRNA stretch occupies residues lysine 145–glutamine 147. The active-site Cysteine persulfide intermediate is the cysteine 195.

Belongs to the MnmA/TRMU family.

The protein resides in the cytoplasm. The catalysed reaction is S-sulfanyl-L-cysteinyl-[protein] + uridine(34) in tRNA + AH2 + ATP = 2-thiouridine(34) in tRNA + L-cysteinyl-[protein] + A + AMP + diphosphate + H(+). Catalyzes the 2-thiolation of uridine at the wobble position (U34) of tRNA, leading to the formation of s(2)U34. The protein is tRNA-specific 2-thiouridylase MnmA of Borrelia recurrentis (strain A1).